The following is a 258-amino-acid chain: 6-carboxyhexanoate--CoA ligase (258 aa).

It belongs to the BioW family. Homodimer. Mg(2+) serves as cofactor.

The catalysed reaction is heptanedioate + ATP + CoA = 6-carboxyhexanoyl-CoA + AMP + diphosphate. It functions in the pathway metabolic intermediate metabolism; pimeloyl-CoA biosynthesis; pimeloyl-CoA from pimelate: step 1/1. Catalyzes the transformation of pimelate into pimeloyl-CoA with concomitant hydrolysis of ATP to AMP. The sequence is that of 6-carboxyhexanoate--CoA ligase from Bacillus atrophaeus (strain 1942).